Reading from the N-terminus, the 621-residue chain is uncharacterized protein (621 aa).

An N-terminal signal peptide occupies residues 1 to 15 (MRRSVCYVTPSVARA).

This sequence belongs to the chlamydial CPn_0512/CT_425/TC_0708 family.

This is an uncharacterized protein from Chlamydia trachomatis serovar D (strain ATCC VR-885 / DSM 19411 / UW-3/Cx).